A 124-amino-acid polypeptide reads, in one-letter code: Small ribosomal subunit protein uS11 (124 aa).

It belongs to the universal ribosomal protein uS11 family. In terms of assembly, part of the 30S ribosomal subunit.

Functionally, located on the platform of the 30S subunit. The protein is Small ribosomal subunit protein uS11 of Methanococcus aeolicus (strain ATCC BAA-1280 / DSM 17508 / OCM 812 / Nankai-3).